The primary structure comprises 210 residues: Na(+)-translocating NADH-quinone reductase subunit D (210 aa).

6 helical membrane passes run 14 to 34 (PIVSNNPIALQVLGVCSALAV), 42 to 62 (LVMTIALTVVCAFSNLFISIL), 72 to 92 (IIVQMTIIASLVIVVDQVLQA), 103 to 123 (VFVGLIITNCIVMGRAEAYAM), 131 to 151 (FMDGIGNGIGYGAILLSVGFI), and 178 to 198 (NGLLLLPPSAFFLIGMLIWII).

It belongs to the NqrDE/RnfAE family. As to quaternary structure, composed of six subunits; NqrA, NqrB, NqrC, NqrD, NqrE and NqrF.

It localises to the cell inner membrane. It carries out the reaction a ubiquinone + n Na(+)(in) + NADH + H(+) = a ubiquinol + n Na(+)(out) + NAD(+). In terms of biological role, NQR complex catalyzes the reduction of ubiquinone-1 to ubiquinol by two successive reactions, coupled with the transport of Na(+) ions from the cytoplasm to the periplasm. NqrA to NqrE are probably involved in the second step, the conversion of ubisemiquinone to ubiquinol. This chain is Na(+)-translocating NADH-quinone reductase subunit D, found in Shewanella halifaxensis (strain HAW-EB4).